We begin with the raw amino-acid sequence, 113 residues long: Hydrogenase maturation factor HypA (113 aa).

His-2 lines the Ni(2+) pocket. Positions 73, 76, 89, and 92 each coordinate Zn(2+).

Belongs to the HypA/HybF family.

Involved in the maturation of [NiFe] hydrogenases. Required for nickel insertion into the metal center of the hydrogenase. The sequence is that of Hydrogenase maturation factor HypA from Picosynechococcus sp. (strain ATCC 27264 / PCC 7002 / PR-6) (Agmenellum quadruplicatum).